The chain runs to 393 residues: Homeobox protein knotted-1-like 4 (393 aa).

The span at 1-13 (MAFHNNHFNHFTD) shows a compositional bias: polar residues. Disordered stretches follow at residues 1–39 (MAFH…PPNW) and 81–114 (QRGN…EKKE). One can recognise an ELK domain in the interval 286 to 306 (ELKHELKQGYKEKIVDIREEI). Positions 307–370 (LRKRRAGKLP…NQRKRNWHSN (64 aa)) form a DNA-binding region, homeobox; TALE-type. The interval 363–393 (RKRNWHSNPSSSTVSKNKRRSNAGENSGRDR) is disordered. Polar residues predominate over residues 368-377 (HSNPSSSTVS).

Belongs to the TALE/KNOX homeobox family. As to quaternary structure, may form heterodimeric complex with the TALE/BELL proteins. Interacts with OFP1, OFP2, OFP4 and OFP12. Interacts with KNATM-B.

Its subcellular location is the nucleus. This Arabidopsis thaliana (Mouse-ear cress) protein is Homeobox protein knotted-1-like 4 (KNAT4).